The sequence spans 150 residues: Ribonuclease H (150 aa).

Residues 7 to 148 enclose the RNase H type-1 domain; that stretch reads ERPRVEIWTD…VDQLATRGRE (142 aa). Asp16, Glu54, Asp76, and Asp140 together coordinate Mg(2+).

The protein belongs to the RNase H family. As to quaternary structure, monomer. The cofactor is Mg(2+).

Its subcellular location is the cytoplasm. The catalysed reaction is Endonucleolytic cleavage to 5'-phosphomonoester.. Functionally, endonuclease that specifically degrades the RNA of RNA-DNA hybrids. The chain is Ribonuclease H from Gluconobacter oxydans (strain 621H) (Gluconobacter suboxydans).